Reading from the N-terminus, the 730-residue chain is uncharacterized protein (730 aa).

The span at 615–625 (FDKENSFDPSD) shows a compositional bias: basic and acidic residues. Disordered stretches follow at residues 615–667 (FDKE…SSFS) and 684–730 (KSGS…FGKI). Low complexity-rich tracts occupy residues 653 to 667 (SSSS…SSFS) and 684 to 701 (KSGS…NSSS). The span at 713 to 723 (KKKKKKKKKKS) shows a compositional bias: basic residues.

This is an uncharacterized protein from Saccharomyces cerevisiae (strain ATCC 204508 / S288c) (Baker's yeast).